Consider the following 196-residue polypeptide: Small ribosomal subunit protein uS4c (196 aa).

Residues 17-36 form a disordered region; that stretch reads ALPGLTRKTPKSGSNLKKKF. One can recognise an S4 RNA-binding domain in the interval 89–150; that stretch reads MRLDNIVFRL…NQRSKRLVQN (62 aa).

Belongs to the universal ribosomal protein uS4 family. Part of the 30S ribosomal subunit. Contacts protein S5. The interaction surface between S4 and S5 is involved in control of translational fidelity.

The protein localises to the plastid. It is found in the chloroplast. One of the primary rRNA binding proteins, it binds directly to 16S rRNA where it nucleates assembly of the body of the 30S subunit. In terms of biological role, with S5 and S12 plays an important role in translational accuracy. In Tragus racemosus (Carrot grass), this protein is Small ribosomal subunit protein uS4c (rps4).